The chain runs to 507 residues: Serine hydroxymethyltransferase (507 aa).

An N6-(pyridoxal phosphate)lysine modification is found at Lys283.

This sequence belongs to the SHMT family. Homotetramer. The cofactor is pyridoxal 5'-phosphate.

The catalysed reaction is (6R)-5,10-methylene-5,6,7,8-tetrahydrofolate + glycine + H2O = (6S)-5,6,7,8-tetrahydrofolate + L-serine. The protein operates within one-carbon metabolism; tetrahydrofolate interconversion. Its function is as follows. Interconversion of serine and glycine. The chain is Serine hydroxymethyltransferase (mel-32) from Caenorhabditis elegans.